Reading from the N-terminus, the 1171-residue chain is ATP-dependent helicase/deoxyribonuclease subunit B (1171 aa).

Positions 1–343 (MSLRFVIGRA…LVADENYRYR (343 aa)) constitute a UvrD-like helicase ATP-binding domain. ATP is bound at residue 8-15 (GRAGSGKS). Residues 281–587 (MEQPRFHSPA…QFANIPPSLD (307 aa)) form the UvrD-like helicase C-terminal domain. The [4Fe-4S] cluster site is built by C805, C1129, C1132, and C1138.

This sequence belongs to the helicase family. AddB/RexB type 1 subfamily. As to quaternary structure, heterodimer of AddA and AddB. The cofactor is Mg(2+). [4Fe-4S] cluster is required as a cofactor.

Functionally, the heterodimer acts as both an ATP-dependent DNA helicase and an ATP-dependent, dual-direction single-stranded exonuclease. Recognizes the chi site generating a DNA molecule suitable for the initiation of homologous recombination. The AddB subunit has 5' -&gt; 3' nuclease activity but not helicase activity. In Bacillus cereus (strain AH187), this protein is ATP-dependent helicase/deoxyribonuclease subunit B.